We begin with the raw amino-acid sequence, 122 residues long: Large ribosomal subunit protein uL14 (122 aa).

It belongs to the universal ribosomal protein uL14 family. As to quaternary structure, part of the 50S ribosomal subunit. Forms a cluster with proteins L3 and L19. In the 70S ribosome, L14 and L19 interact and together make contacts with the 16S rRNA in bridges B5 and B8.

In terms of biological role, binds to 23S rRNA. Forms part of two intersubunit bridges in the 70S ribosome. The protein is Large ribosomal subunit protein uL14 of Neisseria gonorrhoeae (strain ATCC 700825 / FA 1090).